Consider the following 333-residue polypeptide: Prenyltransferase stbC (333 aa).

The next 8 membrane-spanning stretches (helical) occupy residues 74-94 (VAFQ…AGCA), 125-145 (ANIF…PLPA), 147-164 (CQRL…YPFC), 173-193 (VILG…AGLP), 201-221 (VPTI…DVVY), 247-267 (ILLT…GVLV), 272-292 (YFFV…IGGI), and 304-324 (SGWF…IEYL).

The protein belongs to the UbiA prenyltransferase family.

It is found in the membrane. The enzyme catalyses orsellinate + (2E,6E)-farnesyl diphosphate = ilicicolinate B + diphosphate. The protein operates within secondary metabolite biosynthesis; terpenoid biosynthesis. In terms of biological role, prenyltransferase; part of the cluster that mediates the biosynthesis of LL-Z1272-beta, also known as ilicicolin B, a prenylated aryl-aldehyde produced by several fungi and that serves as a key pathway intermediate for many fungal meroterpenoids. The first step in the pathway is performed by the non-reducing polyketide synthase stbA that produces orsellinic acid by condensing acetyl-CoA with 3 malonyl-CoA units. The prenyltransferase stbC then prenylates orsenilic acid into grifolic acid. Finally, grifolic acid is reduced to ilicicolin B by the NRPS-like protein stbB. In Stachybotrys bisbyi (Hyalostachybotrys bisbyi), this protein is Prenyltransferase stbC.